Here is a 504-residue protein sequence, read N- to C-terminus: MVKIRPDEISSVIRQQIEQYTQEAQVVNVGTVLQVGDGIARIYGLQKVMSGELLEFQDGTIGVALNLETDNVGAVLMGDGLKIQEGDSVKATGKIAQVPVGEAFLGRVVDALARPIDGRGDIKADGTRLIESPAPGIIARRSVYEPLQTGLVSIDAMIPIGRGQRELIIGDRQTGKTAVATDTIINQKGGDVICVYVAIGQKASSVAQIVTTLTNAGAMDYTIIVSETADSPATLQYLAPYTGASLAEYFMYTGRATLIIYDDLSKQAQAYRQMSLLLKRPPGREAYPGDVFYLHSRLLERAAKLSDALGEGSMTALPIIETQGGDVSAYIPTNVISITDGQVFLSADLFNSGIRPAINVGISVSRVGSAAQIKAMKQVAGTLKLELAQFAELEAFSQFASDLDQATQNQLARGARLRELLKQAQNQPLSVDMQVATIYTGTQGHLDDLAVGQVRSFLTGLREYIKTNKASFCSDVTSSKKFGPEAEEMLKAAIAEYKAIFKAS.

Position 170 to 177 (170 to 177 (GDRQTGKT)) interacts with ATP.

This sequence belongs to the ATPase alpha/beta chains family. As to quaternary structure, F-type ATPases have 2 components, CF(1) - the catalytic core - and CF(0) - the membrane proton channel. CF(1) has five subunits: alpha(3), beta(3), gamma(1), delta(1), epsilon(1). CF(0) has four main subunits: a, b, b' and c.

It localises to the plastid. It is found in the chloroplast thylakoid membrane. It carries out the reaction ATP + H2O + 4 H(+)(in) = ADP + phosphate + 5 H(+)(out). In terms of biological role, produces ATP from ADP in the presence of a proton gradient across the membrane. The alpha chain is a regulatory subunit. The sequence is that of ATP synthase subunit alpha, chloroplastic from Ostreococcus tauri.